The following is a 201-amino-acid chain: Putative manganese efflux pump MntP 2 (201 aa).

The next 6 membrane-spanning stretches (helical) occupy residues L3–T23, I39–I59, I65–I85, L116–F136, I141–M161, and I176–I196.

This sequence belongs to the MntP (TC 9.B.29) family.

The protein resides in the cell membrane. Probably functions as a manganese efflux pump. The sequence is that of Putative manganese efflux pump MntP 2 from Clostridium botulinum (strain Hall / ATCC 3502 / NCTC 13319 / Type A).